The primary structure comprises 444 residues: tRNA-2-methylthio-N(6)-dimethylallyladenosine synthase (444 aa).

Residues 4-120 enclose the MTTase N-terminal domain; that stretch reads PTYYTITFGC…LGDLLAQVEA (117 aa). 6 residues coordinate [4Fe-4S] cluster: cysteine 13, cysteine 49, cysteine 83, cysteine 155, cysteine 159, and cysteine 162. The Radical SAM core domain occupies 141-372; sequence RDSQVTAWIN…RLVAEVAAAR (232 aa). In terms of domain architecture, TRAM spans 374 to 438; it reads ARLLGQVQEV…AFSLTGEAVT (65 aa).

The protein belongs to the methylthiotransferase family. MiaB subfamily. In terms of assembly, monomer. The cofactor is [4Fe-4S] cluster.

The protein localises to the cytoplasm. It catalyses the reaction N(6)-dimethylallyladenosine(37) in tRNA + (sulfur carrier)-SH + AH2 + 2 S-adenosyl-L-methionine = 2-methylsulfanyl-N(6)-dimethylallyladenosine(37) in tRNA + (sulfur carrier)-H + 5'-deoxyadenosine + L-methionine + A + S-adenosyl-L-homocysteine + 2 H(+). In terms of biological role, catalyzes the methylthiolation of N6-(dimethylallyl)adenosine (i(6)A), leading to the formation of 2-methylthio-N6-(dimethylallyl)adenosine (ms(2)i(6)A) at position 37 in tRNAs that read codons beginning with uridine. The protein is tRNA-2-methylthio-N(6)-dimethylallyladenosine synthase of Synechococcus sp. (strain JA-2-3B'a(2-13)) (Cyanobacteria bacterium Yellowstone B-Prime).